The chain runs to 100 residues: Protein RnfH (100 aa).

This sequence belongs to the UPF0125 (RnfH) family.

This Pseudomonas paraeruginosa (strain DSM 24068 / PA7) (Pseudomonas aeruginosa (strain PA7)) protein is Protein RnfH.